A 380-amino-acid chain; its full sequence is Cytochrome b (380 aa).

Transmembrane regions (helical) follow at residues 33–53 (FGSL…FLAM), 77–98 (WLIR…FIHV), 113–133 (WNIG…GYVL), and 178–198 (FFAF…VHLL). 2 residues coordinate heme b: histidine 83 and histidine 97. 2 residues coordinate heme b: histidine 182 and histidine 196. A ubiquinone is bound at residue histidine 201. 4 helical membrane-spanning segments follow: residues 226-246 (IKDL…VLFF), 288-308 (LGGV…PLLN), 320-340 (ITQA…WIGG), and 347-367 (FTLI…IFMP).

Belongs to the cytochrome b family. As to quaternary structure, the cytochrome bc1 complex contains 11 subunits: 3 respiratory subunits (MT-CYB, CYC1 and UQCRFS1), 2 core proteins (UQCRC1 and UQCRC2) and 6 low-molecular weight proteins (UQCRH/QCR6, UQCRB/QCR7, UQCRQ/QCR8, UQCR10/QCR9, UQCR11/QCR10 and a cleavage product of UQCRFS1). This cytochrome bc1 complex then forms a dimer. Heme b is required as a cofactor.

The protein resides in the mitochondrion inner membrane. Component of the ubiquinol-cytochrome c reductase complex (complex III or cytochrome b-c1 complex) that is part of the mitochondrial respiratory chain. The b-c1 complex mediates electron transfer from ubiquinol to cytochrome c. Contributes to the generation of a proton gradient across the mitochondrial membrane that is then used for ATP synthesis. This Rhipidomys wetzeli (Wetzel's climbing mouse) protein is Cytochrome b (MT-CYB).